Here is a 512-residue protein sequence, read N- to C-terminus: Maturase K (512 aa).

Belongs to the intron maturase 2 family. MatK subfamily.

The protein localises to the plastid. Its subcellular location is the chloroplast. Usually encoded in the trnK tRNA gene intron. Probably assists in splicing its own and other chloroplast group II introns. The polypeptide is Maturase K (Erythranthe guttata (Yellow monkey flower)).